The chain runs to 143 residues: Putative pre-16S rRNA nuclease (143 aa).

The protein belongs to the YqgF nuclease family.

Its subcellular location is the cytoplasm. Could be a nuclease involved in processing of the 5'-end of pre-16S rRNA. The polypeptide is Putative pre-16S rRNA nuclease (Leuconostoc citreum (strain KM20)).